The following is a 424-amino-acid chain: Tyrosine--tRNA ligase (424 aa).

Tyrosine 37 is an L-tyrosine binding site. The short motif at 42-51 is the 'HIGH' region element; it reads ITADSLHVGH. Tyrosine 175 and glutamine 179 together coordinate L-tyrosine. The 'KMSKS' region motif lies at 235 to 239; the sequence is KFGKT. An ATP-binding site is contributed by lysine 238. Positions 356–414 constitute an S4 RNA-binding domain; that stretch reads GNLQQLLVYSRLALSRSHAKSMIVSNSVRINNIIQNNPFYILCNRDKMYHKYTLLSRGK.

This sequence belongs to the class-I aminoacyl-tRNA synthetase family. TyrS type 1 subfamily. As to quaternary structure, homodimer.

It is found in the cytoplasm. It carries out the reaction tRNA(Tyr) + L-tyrosine + ATP = L-tyrosyl-tRNA(Tyr) + AMP + diphosphate + H(+). Catalyzes the attachment of tyrosine to tRNA(Tyr) in a two-step reaction: tyrosine is first activated by ATP to form Tyr-AMP and then transferred to the acceptor end of tRNA(Tyr). In Buchnera aphidicola subsp. Baizongia pistaciae (strain Bp), this protein is Tyrosine--tRNA ligase.